The following is a 329-amino-acid chain: MSVSGYPRHRPRRLRSTPAMRRLVAQTSLEPRNLVLPMFVADGIDELRPIASMPGVVQHTRDSLRRAAVAAVDAGVGGLNLFGVPRDQDKDATGSAGVDPDGILNVALRDLAEDLGDATVLMADTCLDEFTDHGHCGVLDGQGRVDNDATVARYVELAVAQAESGANVVGPSGMMDGQIGALRDGLDSAGYADVAILAYAAKFSSAFYGPFREAVSCSLSGDRRTYQQEPGNAREALREIKLDLDEGADIIMIKPASGYLDVVATAAGVSPVPVAAYQVSGEYAMICAAAANNWIDERAAVLESLTSIRRAGADIVFTYWAADVACWLS.

Catalysis depends on Lys-202, which acts as the Schiff-base intermediate with substrate. 5-aminolevulinate contacts are provided by Arg-212 and Arg-223. Position 239 (Glu-239) interacts with Mg(2+). The active-site Schiff-base intermediate with substrate is Lys-254. Ser-280 and Tyr-319 together coordinate 5-aminolevulinate.

This sequence belongs to the ALAD family. As to quaternary structure, homooctamer.

The catalysed reaction is 2 5-aminolevulinate = porphobilinogen + 2 H2O + H(+). The protein operates within porphyrin-containing compound metabolism; protoporphyrin-IX biosynthesis; coproporphyrinogen-III from 5-aminolevulinate: step 1/4. In terms of biological role, catalyzes an early step in the biosynthesis of tetrapyrroles. Binds two molecules of 5-aminolevulinate per subunit, each at a distinct site, and catalyzes their condensation to form porphobilinogen. The chain is Delta-aminolevulinic acid dehydratase (hemB) from Mycobacterium leprae (strain TN).